Consider the following 347-residue polypeptide: Cyclic AMP-dependent transcription factor ATF-4 (347 aa).

A disordered region spans residues 202–296 (TPQCVKEEDT…AATRYRQKKR (95 aa)). At Thr-211 the chain carries Phosphothreonine. Phosphoserine occurs at positions 213, 217, 222, 229, and 233. Positions 213–222 (SDSDSGICMS) match the BetaTrCP degron motif motif. The span at 228 to 238 (GSPQHSPSTSR) shows a compositional bias: polar residues. Pro-234 is subject to 4-hydroxyproline. Phosphoserine occurs at positions 243 and 246. Residues Lys-256 and Lys-268 each participate in a glycyl lysine isopeptide (Lys-Gly) (interchain with G-Cter in SUMO2) cross-link. The segment covering 269 to 283 (VKTEKLDKKLKKMEQ) has biased composition (basic and acidic residues). The 64-residue stretch at 274 to 337 (LDKKLKKMEQ…QYLKDLIEEV (64 aa)) folds into the bZIP domain. Residues 276-296 (KKLKKMEQNKTAATRYRQKKR) form a basic motif region. The tract at residues 301–337 (ALTGECKELEKKNEALKEKADSLAKEIQYLKDLIEEV) is interaction with GABBR1. The leucine-zipper stretch occupies residues 302 to 330 (LTGECKELEKKNEALKEKADSLAKEIQYL). An N6-acetyllysine modification is found at Lys-307.

It belongs to the bZIP family. As to quaternary structure, binds DNA as a homodimer and as a heterodimer. Heterodimer; heterodimerizes with CEBPB. Heterodimer; heterodimerizes with DDIT3/CHOP. Interacts with CEP290 (via an N-terminal region). Interacts with NEK6, DAPK2 (isoform 2) and ZIPK/DAPK3. Interacts (via its leucine zipper domain) with GABBR1 and GABBR2 (via their C-termini). Forms a heterodimer with TXLNG in osteoblasts. Interacts (via its DNA binding domain) with FOXO1 (C-terminal half); the interaction occurs in osteoblasts and regulates glucose homeostasis through suppression of beta-cell proliferation and a decrease in insulin production. Interacts with SATB2; the interaction results in enhanced DNA binding and transactivation by these transcription factors. Interacts with ABRAXAS2. Interacts with TRIB3, inhibiting the transactivation activity of ATF4. Interacts with DISC1; which inhibits ATF4 transcription factor activity by disrupting ATF4 dimerization and DNA-binding. Interacts with EP300/p300; EP300/p300 stabilizes ATF4 and increases its transcriptional activity independently of its catalytic activity by preventing its ubiquitination. Post-translationally, ubiquitinated by SCF(BTRC) in response to mTORC1 signal, followed by proteasomal degradation and leading to down-regulate expression of SIRT4. Interaction with EP300/p300 inhibits ubiquitination by SCF(BTRC). In terms of processing, phosphorylation at Ser-243 by RPS6KA3/RSK2 in osteoblasts enhances transactivation activity and promotes osteoblast differentiation. Phosphorylated on the betaTrCP degron motif at Ser-217, followed by phosphorylation at Thr-211, Ser-222, Ser-229, Ser-233 and Ser-246, promoting interaction with BTRC and ubiquitination. Phosphorylation is promoted by mTORC1. Phosphorylation at Ser-213 by CK2 decreases its stability. Phosphorylated by NEK6. Hydroxylated by PHD3, leading to decreased protein stability. In terms of tissue distribution, expressed in brain, heart, liver, spleen, lung and muscle, but not testis.

The protein localises to the nucleus. Its subcellular location is the nucleus speckle. The protein resides in the cytoplasm. It localises to the cell membrane. It is found in the cytoskeleton. The protein localises to the microtubule organizing center. Its subcellular location is the centrosome. Transcription factor that binds the cAMP response element (CRE) (consensus: 5'-GTGACGT[AC][AG]-3') and displays two biological functions, as regulator of metabolic and redox processes under normal cellular conditions, and as master transcription factor during integrated stress response (ISR). Binds to asymmetric CRE's as a heterodimer and to palindromic CRE's as a homodimer. Core effector of the ISR, which is required for adaptation to various stress such as endoplasmic reticulum (ER) stress, amino acid starvation, mitochondrial stress or oxidative stress. During ISR, ATF4 translation is induced via an alternative ribosome translation re-initiation mechanism in response to EIF2S1/eIF-2-alpha phosphorylation, and stress-induced ATF4 acts as a master transcription factor of stress-responsive genes in order to promote cell recovery. Promotes the transcription of genes linked to amino acid sufficiency and resistance to oxidative stress to protect cells against metabolic consequences of ER oxidation. Activates the transcription of NLRP1, possibly in concert with other factors in response to ER stress. Activates the transcription of asparagine synthetase (ASNS) in response to amino acid deprivation or ER stress. However, when associated with DDIT3/CHOP, the transcriptional activation of the ASNS gene is inhibited in response to amino acid deprivation. Together with DDIT3/CHOP, mediates programmed cell death by promoting the expression of genes involved in cellular amino acid metabolic processes, mRNA translation and the terminal unfolded protein response (terminal UPR), a cellular response that elicits programmed cell death when ER stress is prolonged and unresolved. Activates the expression of COX7A2L/SCAF1 downstream of the EIF2AK3/PERK-mediated unfolded protein response, thereby promoting formation of respiratory chain supercomplexes and increasing mitochondrial oxidative phosphorylation. Together with DDIT3/CHOP, activates the transcription of the IRS-regulator TRIB3 and promotes ER stress-induced neuronal cell death by regulating the expression of BBC3/PUMA in response to ER stress. May cooperate with the UPR transcriptional regulator QRICH1 to regulate ER protein homeostasis which is critical for cell viability in response to ER stress. In the absence of stress, ATF4 translation is at low levels and it is required for normal metabolic processes such as embryonic lens formation, fetal liver hematopoiesis, bone development and synaptic plasticity. Acts as a regulator of osteoblast differentiation in response to phosphorylation by RPS6KA3/RSK2: phosphorylation in osteoblasts enhances transactivation activity and promotes expression of osteoblast-specific genes and post-transcriptionally regulates the synthesis of Type I collagen, the main constituent of the bone matrix. Cooperates with FOXO1 in osteoblasts to regulate glucose homeostasis through suppression of beta-cell production and decrease in insulin production. Activates transcription of SIRT4. Regulates the circadian expression of the core clock component PER2 and the serotonin transporter SLC6A4. Binds in a circadian time-dependent manner to the cAMP response elements (CRE) in the SLC6A4 and PER2 promoters and periodically activates the transcription of these genes. Mainly acts as a transcriptional activator in cellular stress adaptation, but it can also act as a transcriptional repressor: acts as a regulator of synaptic plasticity by repressing transcription, thereby inhibiting induction and maintenance of long-term memory. Regulates synaptic functions via interaction with DISC1 in neurons, which inhibits ATF4 transcription factor activity by disrupting ATF4 dimerization and DNA-binding. This is Cyclic AMP-dependent transcription factor ATF-4 from Rattus norvegicus (Rat).